Consider the following 475-residue polypeptide: Na(+)/H(+) antiporter NhaA 2 (475 aa).

A run of 12 helical transmembrane segments spans residues 44–64 (AQAT…WWAN), 92–112 (LKHI…GLEI), 130–150 (LILC…LFNW), 156–176 (IGWG…LTLV), 186–206 (AFLV…IALF), 211–231 (ISVI…IANY), 232–252 (AGVL…WTML), 255–275 (GVHP…RPML), 331–351 (ALDL…NAGV), 368–388 (LGIV…ACWL), 406–426 (VIGM…IATL), and 442–462 (ILFA…IIAA).

This sequence belongs to the NhaA Na(+)/H(+) (TC 2.A.33) antiporter family.

The protein resides in the cell inner membrane. It carries out the reaction Na(+)(in) + 2 H(+)(out) = Na(+)(out) + 2 H(+)(in). Its function is as follows. Na(+)/H(+) antiporter that extrudes sodium in exchange for external protons. The protein is Na(+)/H(+) antiporter NhaA 2 of Psychromonas ingrahamii (strain DSM 17664 / CCUG 51855 / 37).